The primary structure comprises 362 residues: MSQTYNVTLLPGDGIGPEIMAVAVAVLGKVADQFGFAFNFQEALIGGAAIDATGQPLPEATLAQAKDSDAVLLAAIGGYAWDNLPRSQRPETGLLAIREGLGLFANLRPATIFPQLIDASSLKREVVEGVDIMVVRELTGGIYFGKPKGIFETETGEKRGVNTMAYTVGEIDRIAKVAFETARKRRGQLCSVDKANVLDVSQLWRDRVMAIAVDYPDVELSHLYVDNAAMQLVRSPRQFDTIVTGNLFGDILSDIAAMLTGSIGMLPSASLGSDGPGLFEPVHGSAPDIAGQDKANPLAQVLSAAMMLRYGLDQPQAADRLEDAVKKVLEQGYRTGDILSPGTQLVGCRQMGEQLLSILDEM.

78–91 (GYAWDNLPRSQRPE) contributes to the NAD(+) binding site. The substrate site is built by R98, R108, R136, and D226. Residues D226, D250, and D254 each contribute to the Mg(2+) site. Residue 284–296 (GSAPDIAGQDKAN) coordinates NAD(+).

Belongs to the isocitrate and isopropylmalate dehydrogenases family. LeuB type 1 subfamily. As to quaternary structure, homodimer. Mg(2+) is required as a cofactor. It depends on Mn(2+) as a cofactor.

It localises to the cytoplasm. It carries out the reaction (2R,3S)-3-isopropylmalate + NAD(+) = 4-methyl-2-oxopentanoate + CO2 + NADH. It functions in the pathway amino-acid biosynthesis; L-leucine biosynthesis; L-leucine from 3-methyl-2-oxobutanoate: step 3/4. In terms of biological role, catalyzes the oxidation of 3-carboxy-2-hydroxy-4-methylpentanoate (3-isopropylmalate) to 3-carboxy-4-methyl-2-oxopentanoate. The product decarboxylates to 4-methyl-2 oxopentanoate. The protein is 3-isopropylmalate dehydrogenase (leuB) of Synechocystis sp. (strain ATCC 27184 / PCC 6803 / Kazusa).